A 635-amino-acid chain; its full sequence is Surface protein F (635 aa).

A signal peptide spans 1 to 37 (MAKYRGKPFQLYVKLSCSTMMATSIILTNILPYDAQA). 2 stretches are compositionally biased toward basic and acidic residues: residues 101-112 (NELDSKDNKSSH) and 193-202 (KSKDASKDTS). 2 disordered regions span residues 101 to 122 (NELDSKDNKSSHTEMNGQSDID) and 192 to 228 (HKSKDASKDTSEDPAVSTTDNNHEVAKTPNNDGSGHV). An LPXTG sorting signal motif is present at residues 597 to 601 (LPKAG). A600 is modified (pentaglycyl murein peptidoglycan amidated alanine). The propeptide at 601–635 (GETIKEHWLPISVIVGAMGVLMIWLSRRNKLKNKA) is removed by sortase.

The protein resides in the secreted. It is found in the cell wall. The chain is Surface protein F from Staphylococcus aureus (strain NCTC 8325 / PS 47).